The sequence spans 504 residues: Maturase K (504 aa).

This sequence belongs to the intron maturase 2 family. MatK subfamily.

The protein resides in the plastid. It is found in the chloroplast. Usually encoded in the trnK tRNA gene intron. Probably assists in splicing its own and other chloroplast group II introns. This chain is Maturase K, found in Gossypium turneri (Cotton).